Here is a 62-residue protein sequence, read N- to C-terminus: Short neurotoxin 1 (62 aa).

The interval 1–20 is disordered; it reads LECHNQQSSEPPTTTRCSGG. Disulfide bonds link Cys-3/Cys-24, Cys-17/Cys-41, Cys-43/Cys-54, and Cys-55/Cys-60.

The protein belongs to the three-finger toxin family. Short-chain subfamily. Type I alpha-neurotoxin sub-subfamily. As to expression, expressed by the venom gland.

Its subcellular location is the secreted. In terms of biological role, binds to muscle nicotinic acetylcholine receptor (nAChR) and inhibit acetylcholine from binding to the receptor, thereby impairing neuromuscular transmission. The sequence is that of Short neurotoxin 1 from Naja mossambica (Mozambique spitting cobra).